The following is a 107-amino-acid chain: Regulatory protein SoxS (107 aa).

The HTH araC/xylS-type domain occupies 8-106; the sequence is QDLIAWIDEH…DRTPSDYRHR (99 aa). DNA-binding regions (H-T-H motif) lie at residues 25–46 and 73–96; these read DVVA…RTVT and IFDI…RRQF.

The protein localises to the cytoplasm. Functionally, transcriptional activator of the superoxide response regulon of E.coli that includes at least 10 genes such as sodA, nfo, zwf and micF. Binds the DNA sequence 5'-GCACN(7)CAA-3'. It also facilitates the subsequent binding of RNA polymerase to the micF and the nfo promoters. The polypeptide is Regulatory protein SoxS (soxS) (Escherichia coli O157:H7).